Reading from the N-terminus, the 347-residue chain is Phosphoribosylformylglycinamidine cyclo-ligase (347 aa).

This sequence belongs to the AIR synthase family.

Its subcellular location is the cytoplasm. It catalyses the reaction 2-formamido-N(1)-(5-O-phospho-beta-D-ribosyl)acetamidine + ATP = 5-amino-1-(5-phospho-beta-D-ribosyl)imidazole + ADP + phosphate + H(+). It functions in the pathway purine metabolism; IMP biosynthesis via de novo pathway; 5-amino-1-(5-phospho-D-ribosyl)imidazole from N(2)-formyl-N(1)-(5-phospho-D-ribosyl)glycinamide: step 2/2. The protein is Phosphoribosylformylglycinamidine cyclo-ligase of Yersinia pseudotuberculosis serotype IB (strain PB1/+).